The following is a 158-amino-acid chain: Disease resistance response protein DRRG49-C (158 aa).

Belongs to the BetVI family.

The chain is Disease resistance response protein DRRG49-C from Pisum sativum (Garden pea).